Reading from the N-terminus, the 398-residue chain is Aurofusarin biosynthesis regulatory protein aurR1 (398 aa).

Residues 18–45 (CDNCAKSKVRCGKEQPWCQRCERRGQVC) constitute a DNA-binding region (zn(2)-C6 fungal-type). Disordered regions lie at residues 52-73 (RSRK…GTPP) and 275-314 (AATI…SSLI). 2 stretches are compositionally biased toward basic and acidic residues: residues 56–67 (RTLDAAHPESDQ) and 289–298 (DGKDTERSVS). Residues 299 to 311 (RDTNVSQDGSEPS) are compositionally biased toward polar residues.

It is found in the nucleus. In terms of biological role, transcription factor that specifically regulates the expression of the gene cluster that mediates the biosynthesis of aurofusarin, a red mycelium pigment which is acting as a mycotoxin. The polypeptide is Aurofusarin biosynthesis regulatory protein aurR1 (Gibberella zeae (strain ATCC MYA-4620 / CBS 123657 / FGSC 9075 / NRRL 31084 / PH-1) (Wheat head blight fungus)).